The chain runs to 193 residues: ATP synthase subunit b 1 (193 aa).

Residues 9–28 form a disordered region; sequence QEADHTAGETHTETGVAEGG. Over residues 10 to 20 the composition is skewed to basic and acidic residues; that stretch reads EADHTAGETHT. The helical transmembrane segment at 40–59 threads the bilayer; sequence TYPSQLLWLAITFGLFYLFL.

It belongs to the ATPase B chain family. In terms of assembly, F-type ATPases have 2 components, F(1) - the catalytic core - and F(0) - the membrane proton channel. F(1) has five subunits: alpha(3), beta(3), gamma(1), delta(1), epsilon(1). F(0) has three main subunits: a(1), b(2) and c(10-14). The alpha and beta chains form an alternating ring which encloses part of the gamma chain. F(1) is attached to F(0) by a central stalk formed by the gamma and epsilon chains, while a peripheral stalk is formed by the delta and b chains.

The protein resides in the cell inner membrane. Functionally, f(1)F(0) ATP synthase produces ATP from ADP in the presence of a proton or sodium gradient. F-type ATPases consist of two structural domains, F(1) containing the extramembraneous catalytic core and F(0) containing the membrane proton channel, linked together by a central stalk and a peripheral stalk. During catalysis, ATP synthesis in the catalytic domain of F(1) is coupled via a rotary mechanism of the central stalk subunits to proton translocation. In terms of biological role, component of the F(0) channel, it forms part of the peripheral stalk, linking F(1) to F(0). This chain is ATP synthase subunit b 1, found in Chelativorans sp. (strain BNC1).